Here is a 270-residue protein sequence, read N- to C-terminus: FKBP-type peptidyl-prolyl cis-trans isomerase FkpA (270 aa).

The N-terminal stretch at 1–25 (MKSLFKVTLLATTMAVALHAPITFA) is a signal peptide. Residues 164 to 249 (SDTVVVNYKG…VFDVELLDVK (86 aa)) enclose the PPIase FKBP-type domain.

The protein belongs to the FKBP-type PPIase family.

It is found in the periplasm. The catalysed reaction is [protein]-peptidylproline (omega=180) = [protein]-peptidylproline (omega=0). Functionally, PPIases accelerate the folding of proteins. It catalyzes the cis-trans isomerization of proline imidic peptide bonds in oligopeptides. The polypeptide is FKBP-type peptidyl-prolyl cis-trans isomerase FkpA (fkpA) (Escherichia coli O157:H7).